We begin with the raw amino-acid sequence, 635 residues long: 1-deoxy-D-xylulose-5-phosphate synthase (635 aa).

Thiamine diphosphate is bound by residues histidine 79 and 120-122 (GHS). Aspartate 151 serves as a coordination point for Mg(2+). Residues 152-153 (GA), asparagine 182, tyrosine 291, and glutamate 372 each bind thiamine diphosphate. Asparagine 182 lines the Mg(2+) pocket.

Belongs to the transketolase family. DXPS subfamily. In terms of assembly, homodimer. The cofactor is Mg(2+). Thiamine diphosphate is required as a cofactor.

It carries out the reaction D-glyceraldehyde 3-phosphate + pyruvate + H(+) = 1-deoxy-D-xylulose 5-phosphate + CO2. Its pathway is metabolic intermediate biosynthesis; 1-deoxy-D-xylulose 5-phosphate biosynthesis; 1-deoxy-D-xylulose 5-phosphate from D-glyceraldehyde 3-phosphate and pyruvate: step 1/1. Catalyzes the acyloin condensation reaction between C atoms 2 and 3 of pyruvate and glyceraldehyde 3-phosphate to yield 1-deoxy-D-xylulose-5-phosphate (DXP). In Xylella fastidiosa (strain M23), this protein is 1-deoxy-D-xylulose-5-phosphate synthase.